Consider the following 279-residue polypeptide: UTP--glucose-1-phosphate uridylyltransferase (279 aa).

The protein belongs to the UDPGP type 2 family.

It catalyses the reaction alpha-D-glucose 1-phosphate + UTP + H(+) = UDP-alpha-D-glucose + diphosphate. Its function is as follows. May play a role in stationary phase survival. The sequence is that of UTP--glucose-1-phosphate uridylyltransferase (galU) from Pseudomonas aeruginosa.